The primary structure comprises 366 residues: Inositol 2-dehydrogenase (366 aa).

It belongs to the Gfo/Idh/MocA family. In terms of assembly, homotetramer.

The catalysed reaction is myo-inositol + NAD(+) = scyllo-inosose + NADH + H(+). Involved in the oxidation of myo-inositol (MI) to 2-keto-myo-inositol (2KMI or 2-inosose). The sequence is that of Inositol 2-dehydrogenase from Rhodococcus jostii (strain RHA1).